A 156-amino-acid chain; its full sequence is Cyclic pyranopterin monophosphate synthase (156 aa).

Substrate is bound by residues 75–77 (LCH) and 111–112 (ME). Asp126 is an active-site residue.

The protein belongs to the MoaC family. Homohexamer; trimer of dimers.

It catalyses the reaction (8S)-3',8-cyclo-7,8-dihydroguanosine 5'-triphosphate = cyclic pyranopterin phosphate + diphosphate. It participates in cofactor biosynthesis; molybdopterin biosynthesis. Its function is as follows. Catalyzes the conversion of (8S)-3',8-cyclo-7,8-dihydroguanosine 5'-triphosphate to cyclic pyranopterin monophosphate (cPMP). This chain is Cyclic pyranopterin monophosphate synthase, found in Corynebacterium glutamicum (strain ATCC 13032 / DSM 20300 / JCM 1318 / BCRC 11384 / CCUG 27702 / LMG 3730 / NBRC 12168 / NCIMB 10025 / NRRL B-2784 / 534).